A 249-amino-acid chain; its full sequence is Probable endopeptidase YafL (249 aa).

Residues 1-17 (MSLPSIPSFVLSGLLLI) form the signal peptide. Residue cysteine 18 is the site of N-palmitoyl cysteine attachment. The S-diacylglycerol cysteine moiety is linked to residue cysteine 18. The NlpC/P60 domain maps to 116–243 (HNITEVAIHR…DHFLGARRIL (128 aa)). Catalysis depends on cysteine 147, which acts as the Nucleophile. Histidine 202 acts as the Proton acceptor in catalysis. Residue glutamate 214 is part of the active site.

Belongs to the peptidase C40 family.

It localises to the cell membrane. In Escherichia coli (strain K12), this protein is Probable endopeptidase YafL (yafL).